Reading from the N-terminus, the 325-residue chain is Phenylalanine--tRNA ligase alpha subunit (325 aa).

Residue glutamate 251 participates in Mg(2+) binding.

This sequence belongs to the class-II aminoacyl-tRNA synthetase family. Phe-tRNA synthetase alpha subunit type 1 subfamily. As to quaternary structure, tetramer of two alpha and two beta subunits. The cofactor is Mg(2+).

It is found in the cytoplasm. It carries out the reaction tRNA(Phe) + L-phenylalanine + ATP = L-phenylalanyl-tRNA(Phe) + AMP + diphosphate + H(+). This is Phenylalanine--tRNA ligase alpha subunit from Thermotoga petrophila (strain ATCC BAA-488 / DSM 13995 / JCM 10881 / RKU-1).